Consider the following 452-residue polypeptide: Tubulin alpha-2/alpha-4 chain (452 aa).

Position 11 (Gln-11) interacts with GTP. The residue at position 40 (Lys-40) is an N6-acetyllysine. Positions 71, 140, 144, 145, 179, 206, and 228 each coordinate GTP. Glu-71 lines the Mg(2+) pocket. Residue Glu-254 is part of the active site. The disordered stretch occupies residues 432–452 (YEEVGVDSVEGEGEEEGGEEY).

The protein belongs to the tubulin family. As to quaternary structure, dimer of alpha and beta chains. A typical microtubule is a hollow water-filled tube with an outer diameter of 25 nm and an inner diameter of 15 nM. Alpha-beta heterodimers associate head-to-tail to form protofilaments running lengthwise along the microtubule wall with the beta-tubulin subunit facing the microtubule plus end conferring a structural polarity. Microtubules usually have 13 protofilaments but different protofilament numbers can be found in some organisms and specialized cells. Mg(2+) serves as cofactor. Undergoes a tyrosination/detyrosination cycle, the cyclic removal and re-addition of a C-terminal tyrosine residue by the enzymes tubulin tyrosine carboxypeptidase (TTCP) and tubulin tyrosine ligase (TTL), respectively. Post-translationally, acetylation of alpha chains at Lys-40 stabilizes microtubules and affects affinity and processivity of microtubule motors. This modification has a role in multiple cellular functions, ranging from cell motility, cell cycle progression or cell differentiation to intracellular trafficking and signaling.

It is found in the cytoplasm. It localises to the cytoskeleton. The enzyme catalyses GTP + H2O = GDP + phosphate + H(+). In terms of biological role, tubulin is the major constituent of microtubules, a cylinder consisting of laterally associated linear protofilaments composed of alpha- and beta-tubulin heterodimers. Microtubules grow by the addition of GTP-tubulin dimers to the microtubule end, where a stabilizing cap forms. Below the cap, tubulin dimers are in GDP-bound state, owing to GTPase activity of alpha-tubulin. The chain is Tubulin alpha-2/alpha-4 chain (TUB2) from Patella vulgata (Common limpet).